The chain runs to 235 residues: MAREGKRIRAAREGIDPTKVYSLTDAVKMIKDRSKAKFDETFEISMNLGVDPRHADQMVRGVCNLPNGSGRTVRVAVFARGAKADEARAAGADIVGAEDLLETIQGGTIDFDRCIATPDMMPLVGRLGKVLGPRGLMPNPKVGTVTMDVKGAVGAAKGGAVEFRVEKAGIVHAGIGKVSFDDQKIVENARAFADAVARAKPTGAKGTYIQRIAVSSTMGPGIKVDPASVLAAQSA.

Belongs to the universal ribosomal protein uL1 family. As to quaternary structure, part of the 50S ribosomal subunit.

Functionally, binds directly to 23S rRNA. The L1 stalk is quite mobile in the ribosome, and is involved in E site tRNA release. In terms of biological role, protein L1 is also a translational repressor protein, it controls the translation of the L11 operon by binding to its mRNA. In Methylobacterium sp. (strain 4-46), this protein is Large ribosomal subunit protein uL1.